The chain runs to 491 residues: Glutamyl-tRNA(Gln) amidotransferase subunit A (491 aa).

Residues Lys77 and Ser152 each act as charge relay system in the active site. Ser176 (acyl-ester intermediate) is an active-site residue.

The protein belongs to the amidase family. GatA subfamily. As to quaternary structure, heterotrimer of A, B and C subunits.

The enzyme catalyses L-glutamyl-tRNA(Gln) + L-glutamine + ATP + H2O = L-glutaminyl-tRNA(Gln) + L-glutamate + ADP + phosphate + H(+). In terms of biological role, allows the formation of correctly charged Gln-tRNA(Gln) through the transamidation of misacylated Glu-tRNA(Gln) in organisms which lack glutaminyl-tRNA synthetase. The reaction takes place in the presence of glutamine and ATP through an activated gamma-phospho-Glu-tRNA(Gln). The chain is Glutamyl-tRNA(Gln) amidotransferase subunit A from Chlamydia abortus (strain DSM 27085 / S26/3) (Chlamydophila abortus).